A 145-amino-acid chain; its full sequence is Plastocyanin, chloroplastic (145 aa).

The N-terminal 47 residues, 1–47, are a transit peptide targeting the chloroplast; that stretch reads MKATLRAPASRASAVRPVASLKAAAQRVASVAGVSVASLALTLAAHA. One can recognise a Plastocyanin-like domain in the interval 48–145; the sequence is DATVKLGADS…AGMVGKIIVQ (98 aa). Cu cation-binding residues include His85, Cys130, His133, and Met138.

It belongs to the plastocyanin family. Cu(2+) serves as cofactor.

It is found in the plastid. It localises to the chloroplast thylakoid membrane. Participates in electron transfer between P700 and the cytochrome b6-f complex in photosystem I. This is Plastocyanin, chloroplastic (PETE) from Chlamydomonas reinhardtii (Chlamydomonas smithii).